An 872-amino-acid polypeptide reads, in one-letter code: MSISKIESVNAEKQSPVGTEIGTHTPMMQQYLRIKEQHPDTLLFYRMGDFYELFFEDAEKAARLLDITLTTRGQSAGMPIRMAGVPFHAVEQYLARLVKLGESVVIAEQVGEPGATKGPMERAVSRIVTPGTLTDAALLDDRRDALLLAANMHRGVLGMAWLNLANGEFRLMECPAESLQAQFERLRPAEVLIPDGLALPLMETLAPALRRLADWQFDADTAHRLLTTHFGTRDLAGFGVEEAPVALGAAAALYDYAKATQRQSLAHLTGLRLEREAEFLRLDAATRRNLELTETLRGEPSPTLLSLLDTCMTSMGSRWLRHALHHPLRDRTIPAARQQAVAALVGDGDGLHAQAVRGALRGVADVDRITGRIALRNARPRDLSALRESLSRLPELRQTLAQIGDEGMVGGLAAALDVQPELLQCLQRAIADEPAAMVRDGGVIAAGYDAELDELRGIQTNCGEFLMALEARERERSGIANLKVEFNKVHGFYIEVSHANADKVPDDYRRRQTLKNVERYITPELKAFEDKALSAQERALAREKALYEALLDALSPYIPALQGCARALATLDGLAAFAEAALRYGYVRPVFSDQPGIEIRGGRHPVVERQVEDFIQNDARLGSTRRMLMITGPNMGGKSTFMRQVALICLLAHVGSFVPAQSAVLGPLDAIFTRIGASDDLASGRSTFMVEMTEASAILHGATEHSLVLMDEIGRGTSTFDGLALAFAIARHLLEKNRSLTLFATHYFELTRLNGEYPECANVHLDAVEHGHRIVFLHALEDGPASQSYGIEVAALAGIPAPVIRDAKRRLRALENREVGAGPQADLFAALPDDDDAPLSHPVLIALAEIDPDSLSPREALERLYALKRLSA.

Polar residues predominate over residues 1–17 (MSISKIESVNAEKQSPV). Residues 1–22 (MSISKIESVNAEKQSPVGTEIG) are disordered. 632 to 639 (GPNMGGKS) is an ATP binding site.

Belongs to the DNA mismatch repair MutS family.

Its function is as follows. This protein is involved in the repair of mismatches in DNA. It is possible that it carries out the mismatch recognition step. This protein has a weak ATPase activity. The chain is DNA mismatch repair protein MutS from Azoarcus sp. (strain BH72).